The primary structure comprises 418 residues: Translation initiation factor 2 subunit gamma (418 aa).

Positions 7–206 constitute a tr-type G domain; it reads QPEVNIGVVG…GIQKYIPTPQ (200 aa). A G1 region spans residues 16–23; sequence GHVDHGKT. Positions 19, 23, 44, and 46 each coordinate Mg(2+). 19–24 lines the GTP pocket; the sequence is DHGKTT. Positions 44-48 are G2; it reads GMTIK. Zn(2+)-binding residues include Cys59, Cys62, Cys74, and Cys77. The G3 stretch occupies residues 93 to 96; sequence DAPG. GTP is bound by residues 149 to 152 and 184 to 186; these read NKVD and SAL. The segment at 149–152 is G4; that stretch reads NKVD. Residues 184-186 are G5; sequence SAL.

This sequence belongs to the TRAFAC class translation factor GTPase superfamily. Classic translation factor GTPase family. EIF2G subfamily. As to quaternary structure, heterotrimer composed of an alpha, a beta and a gamma chain. Mg(2+) serves as cofactor.

The catalysed reaction is GTP + H2O = GDP + phosphate + H(+). In terms of biological role, eIF-2 functions in the early steps of protein synthesis by forming a ternary complex with GTP and initiator tRNA. This chain is Translation initiation factor 2 subunit gamma, found in Sulfurisphaera tokodaii (strain DSM 16993 / JCM 10545 / NBRC 100140 / 7) (Sulfolobus tokodaii).